The following is a 67-amino-acid chain: Large ribosomal subunit protein uL29 (67 aa).

Belongs to the universal ribosomal protein uL29 family.

The protein is Large ribosomal subunit protein uL29 of Exiguobacterium sibiricum (strain DSM 17290 / CCUG 55495 / CIP 109462 / JCM 13490 / 255-15).